Here is a 154-residue protein sequence, read N- to C-terminus: SsrA-binding protein (154 aa).

The interval 134-154 (DKREDIKKRDQERELSRRFKN) is disordered.

It belongs to the SmpB family.

The protein resides in the cytoplasm. Its function is as follows. Required for rescue of stalled ribosomes mediated by trans-translation. Binds to transfer-messenger RNA (tmRNA), required for stable association of tmRNA with ribosomes. tmRNA and SmpB together mimic tRNA shape, replacing the anticodon stem-loop with SmpB. tmRNA is encoded by the ssrA gene; the 2 termini fold to resemble tRNA(Ala) and it encodes a 'tag peptide', a short internal open reading frame. During trans-translation Ala-aminoacylated tmRNA acts like a tRNA, entering the A-site of stalled ribosomes, displacing the stalled mRNA. The ribosome then switches to translate the ORF on the tmRNA; the nascent peptide is terminated with the 'tag peptide' encoded by the tmRNA and targeted for degradation. The ribosome is freed to recommence translation, which seems to be the essential function of trans-translation. The sequence is that of SsrA-binding protein from Leuconostoc mesenteroides subsp. mesenteroides (strain ATCC 8293 / DSM 20343 / BCRC 11652 / CCM 1803 / JCM 6124 / NCDO 523 / NBRC 100496 / NCIMB 8023 / NCTC 12954 / NRRL B-1118 / 37Y).